Consider the following 428-residue polypeptide: Sorting nexin-31 (428 aa).

In terms of domain architecture, PX spans 1–107; sequence MHICIPVTEE…EYFKKLQMDT (107 aa).

Belongs to the sorting nexin family.

Functionally, may be involved in protein trafficking. In Xenopus tropicalis (Western clawed frog), this protein is Sorting nexin-31 (snx31).